A 111-amino-acid chain; its full sequence is UPF0145 protein RBAM_010660 (111 aa).

Belongs to the UPF0145 family.

The protein is UPF0145 protein RBAM_010660 of Bacillus velezensis (strain DSM 23117 / BGSC 10A6 / LMG 26770 / FZB42) (Bacillus amyloliquefaciens subsp. plantarum).